We begin with the raw amino-acid sequence, 347 residues long: Methionine import ATP-binding protein MetN (347 aa).

In terms of domain architecture, ABC transporter spans 2-247 (ITTTGLTKVY…PGSELASALF (246 aa)). 38–45 (GQSGAGKS) contributes to the ATP binding site.

This sequence belongs to the ABC transporter superfamily. Methionine importer (TC 3.A.1.24) family. As to quaternary structure, the complex is composed of two ATP-binding proteins (MetN), two transmembrane proteins (MetI) and a solute-binding protein (MetQ).

Its subcellular location is the cell membrane. The catalysed reaction is L-methionine(out) + ATP + H2O = L-methionine(in) + ADP + phosphate + H(+). It carries out the reaction D-methionine(out) + ATP + H2O = D-methionine(in) + ADP + phosphate + H(+). In terms of biological role, part of the ABC transporter complex MetNIQ involved in methionine import. Responsible for energy coupling to the transport system. The protein is Methionine import ATP-binding protein MetN of Streptomyces avermitilis (strain ATCC 31267 / DSM 46492 / JCM 5070 / NBRC 14893 / NCIMB 12804 / NRRL 8165 / MA-4680).